A 149-amino-acid chain; its full sequence is Nucleoside diphosphate kinase (149 aa).

Lysine 9, phenylalanine 57, arginine 85, threonine 91, arginine 102, and asparagine 112 together coordinate ATP. Histidine 115 serves as the catalytic Pros-phosphohistidine intermediate.

It belongs to the NDK family. Mg(2+) serves as cofactor.

It is found in the cytoplasm. The catalysed reaction is a 2'-deoxyribonucleoside 5'-diphosphate + ATP = a 2'-deoxyribonucleoside 5'-triphosphate + ADP. It catalyses the reaction a ribonucleoside 5'-diphosphate + ATP = a ribonucleoside 5'-triphosphate + ADP. In terms of biological role, major role in the synthesis of nucleoside triphosphates other than ATP. The ATP gamma phosphate is transferred to the NDP beta phosphate via a ping-pong mechanism, using a phosphorylated active-site intermediate. This is Nucleoside diphosphate kinase from Methanocorpusculum labreanum (strain ATCC 43576 / DSM 4855 / Z).